The sequence spans 352 residues: MEKYEKIGKIGEGSYGVVFKCRNRDTGQIVAIKRFLETEDDPVIKKIALREIRMLKQLKHPNLVSLLEVFRRKRRLHLVFEYCHHTVLHELDRYQRGVPEPLVKNITWQTLQAVNFCHKHNCIHRDVKPENILITKHSVIKLCDFGFARLLTGPGDYYTDYVATRWYRSPELLVGDTQYGPPVDVWAIGCVFAELLSGVPLWPGKSDVDQLYLIRKTLGDLIPRHQQVFSMNQYFSGVKIPDPEDMETLELKFPNISYSALGFLKGCLHMDPAERLTCEQLLQHPYFDSIRDVGELARPHDKPTRKTLRQSRKHLTGLQHLPQLTSSSVLPALDRKKYHCGTRNFNYHFPNI.

The region spanning 4–287 is the Protein kinase domain; it reads YEKIGKIGEG…CEQLLQHPYF (284 aa). Residues 10–18 and Lys-33 contribute to the ATP site; that span reads IGEGSYGVV. Residues 45–51 carry the [NKR]KIAxRE motif; the sequence is KKIALRE. Asp-126 functions as the Proton acceptor in the catalytic mechanism.

It belongs to the protein kinase superfamily. CMGC Ser/Thr protein kinase family. CDC2/CDKX subfamily.

The protein localises to the cytoplasm. The protein resides in the nucleus. The enzyme catalyses L-seryl-[protein] + ATP = O-phospho-L-seryl-[protein] + ADP + H(+). It catalyses the reaction L-threonyl-[protein] + ATP = O-phospho-L-threonyl-[protein] + ADP + H(+). The polypeptide is Cyclin-dependent kinase-like 1 (Rattus norvegicus (Rat)).